Reading from the N-terminus, the 162-residue chain is Toluate 1,2-dioxygenase subunit beta (162 aa).

It belongs to the bacterial ring-hydroxylating dioxygenase beta subunit family. In terms of assembly, this dioxygenase system consists of three proteins: the two subunits of the hydroxylase component (XylX and XylY), and an electron transfer component (XylZ).

It functions in the pathway xenobiotic degradation; toluene degradation. This is Toluate 1,2-dioxygenase subunit beta (xylY) from Pseudomonas putida (Arthrobacter siderocapsulatus).